The primary structure comprises 468 residues: Proline--tRNA ligase (468 aa).

Belongs to the class-II aminoacyl-tRNA synthetase family. ProS type 3 subfamily. In terms of assembly, homodimer.

It is found in the cytoplasm. The enzyme catalyses tRNA(Pro) + L-proline + ATP = L-prolyl-tRNA(Pro) + AMP + diphosphate. Its function is as follows. Catalyzes the attachment of proline to tRNA(Pro) in a two-step reaction: proline is first activated by ATP to form Pro-AMP and then transferred to the acceptor end of tRNA(Pro). The protein is Proline--tRNA ligase of Frankia alni (strain DSM 45986 / CECT 9034 / ACN14a).